Consider the following 379-residue polypeptide: MDNLANQGVIVLAAGGTGGHLFPAEALAHELRARGWDVHLATDARAQRFVGAFAQDHVHVIRSATIAGRNPVALLKTFWSLWQGNLDSRKLFRRLKPKLVVGFGGYPTLPPLYAASNMGIPTLIHEQNAVMGRANKGLAGRVKAIAGGFLPENSGAYAAKTVITGNPVRSPVLVAAATPYTPAGKDDRFRLLVFGGSQGAQFFSQAIPAAVALLPEHERARLLITQQARKEDEASARQAYEKLGVPADVAPFFNDMPARMADAHFVIARSGASTVSEITVIGRPAMLVPFPHALDHDQAANAAALAAAGGAEVVRQADLSPQRLAEMLQSAMNEPERLEQQAKAAKSVGKPDAARLLADLAEAIASGKTVQEFKEGNRP.

UDP-N-acetyl-alpha-D-glucosamine contacts are provided by residues 17–19 (TGG), Asn128, Arg169, Ser197, and Gln298.

Belongs to the glycosyltransferase 28 family. MurG subfamily.

It is found in the cell inner membrane. It catalyses the reaction di-trans,octa-cis-undecaprenyl diphospho-N-acetyl-alpha-D-muramoyl-L-alanyl-D-glutamyl-meso-2,6-diaminopimeloyl-D-alanyl-D-alanine + UDP-N-acetyl-alpha-D-glucosamine = di-trans,octa-cis-undecaprenyl diphospho-[N-acetyl-alpha-D-glucosaminyl-(1-&gt;4)]-N-acetyl-alpha-D-muramoyl-L-alanyl-D-glutamyl-meso-2,6-diaminopimeloyl-D-alanyl-D-alanine + UDP + H(+). The protein operates within cell wall biogenesis; peptidoglycan biosynthesis. Functionally, cell wall formation. Catalyzes the transfer of a GlcNAc subunit on undecaprenyl-pyrophosphoryl-MurNAc-pentapeptide (lipid intermediate I) to form undecaprenyl-pyrophosphoryl-MurNAc-(pentapeptide)GlcNAc (lipid intermediate II). This is UDP-N-acetylglucosamine--N-acetylmuramyl-(pentapeptide) pyrophosphoryl-undecaprenol N-acetylglucosamine transferase from Brucella abortus (strain S19).